The chain runs to 389 residues: Growth/differentiation factor 2 (389 aa).

Residues 1–20 form the signal peptide; the sequence is MWRVGHLLLLMSIVFRITEE. A propeptide spanning residues 21–280 is cleaved from the precursor; the sequence is KSLGDAGSLE…PVSNRHRRRK (260 aa). Asparagine 65, asparagine 118, asparagine 127, and asparagine 232 each carry an N-linked (GlcNAc...) asparagine glycan. Residues 263–272 show a composition bias toward polar residues; the sequence is QQQVGNQAPV. A disordered region spans residues 263-284; it reads QQQVGNQAPVSNRHRRRKRKAK. A compositionally biased stretch (basic residues) spans 274-284; it reads NRHRRRKRKAK. Intrachain disulfides connect cysteine 288/cysteine 354, cysteine 317/cysteine 386, and cysteine 321/cysteine 388. Asparagine 342 is a glycosylation site (N-linked (GlcNAc...) asparagine).

Belongs to the TGF-beta family. Homodimer; disulfide-linked. A reversible disulfide bond can be formed between the two subunits in the homodimer; this has no effect on gdf2 activity.

It is found in the secreted. In terms of biological role, potent circulating inhibitor of angiogenesis. Signals through the type I activin receptor ACVRL1 but not other Alks. Signaling through SMAD1 in endothelial cells requires TGF-beta coreceptor endoglin/eng. This chain is Growth/differentiation factor 2 (gdf2), found in Danio rerio (Zebrafish).